The primary structure comprises 180 residues: FMN reductase (NADH) RutF (180 aa).

It belongs to the non-flavoprotein flavin reductase family. RutF subfamily.

The enzyme catalyses FMNH2 + NAD(+) = FMN + NADH + 2 H(+). In terms of biological role, catalyzes the reduction of FMN to FMNH2 which is used to reduce pyrimidine by RutA via the Rut pathway. This Bradyrhizobium diazoefficiens (strain JCM 10833 / BCRC 13528 / IAM 13628 / NBRC 14792 / USDA 110) protein is FMN reductase (NADH) RutF.